Here is a 369-residue protein sequence, read N- to C-terminus: Eukaryotic translation initiation factor 3 subunit F (369 aa).

The MPN domain occupies 31–170 (VNIQPQAVFS…TKTYISAPVA (140 aa)). Residues 309–334 (LDEGKEGGEKKDGEGAEGDKKTDGQR) are compositionally biased toward basic and acidic residues. The tract at residues 309 to 369 (LDEGKEGGEK…EPREPREAAE (61 aa)) is disordered. Positions 335–353 (GQRGQGGKRGGRSGGAGGR) are enriched in gly residues. Residues 354–369 (GGREQREPREPREAAE) show a composition bias toward basic and acidic residues.

It belongs to the eIF-3 subunit F family. As to quaternary structure, component of the eukaryotic translation initiation factor 3 (eIF-3) complex.

It localises to the cytoplasm. In terms of biological role, component of the eukaryotic translation initiation factor 3 (eIF-3) complex, which is involved in protein synthesis of a specialized repertoire of mRNAs and, together with other initiation factors, stimulates binding of mRNA and methionyl-tRNAi to the 40S ribosome. The eIF-3 complex specifically targets and initiates translation of a subset of mRNAs involved in cell proliferation. The sequence is that of Eukaryotic translation initiation factor 3 subunit F from Neurospora crassa (strain ATCC 24698 / 74-OR23-1A / CBS 708.71 / DSM 1257 / FGSC 987).